Here is a 1603-residue protein sequence, read N- to C-terminus: GATOR1 complex protein DEPDC5 (1603 aa).

Disordered stretches follow at residues 427–450 (GKKP…KESE), 484–527 (VRER…SSLG), and 696–720 (LSNS…VSTS). A compositionally biased stretch (basic and acidic residues) spans 430–439 (PASEKAKNGR). Low complexity predominate over residues 494–508 (SASSCDVSSSPSLPS). Phosphoserine is present on Ser-505. 2 stretches are compositionally biased toward polar residues: residues 518–527 (SQASDDSSLG) and 696–707 (LSNSGAGMNPRT). Position 1002 is a phosphoserine; by PIM1 (Ser-1002). Polar residues predominate over residues 1135-1153 (DRGNSQTFGNSQNIGEQGY). The tract at residues 1135–1165 (DRGNSQTFGNSQNIGEQGYSSTNSSDSSSQQ) is disordered. Low complexity predominate over residues 1154–1165 (SSTNSSDSSSQQ). Residues 1187–1262 (PSTGVQLLSE…YGFYFYKIVT (76 aa)) enclose the DEP domain. The residue at position 1530 (Ser-1530) is a Phosphoserine; by PKB/AKT1 and PIM1.

This sequence belongs to the IML1 family. Within the GATOR complex, component of the GATOR1 subcomplex, made of DEPDC5, NPRL2 and NPRL3. GATOR1 mediates the strong interaction of the GATOR complex with small GTPases Rag (RagA/RRAGA, RagB/RRAGB, RagC/RRAGC and/or RagD/RRAGD) heterodimers. Interacts with SAMTOR; interaction is direct and takes place in presence of methionine, leading to inhibit the activity of the GATOR1 complex. Phosphorylation at Ser-1002 and Ser-1530 by AKT1 and PIM1 inhibit the activity of DEPDC5, releasing inhibition of the mTORC1 pathway. Post-translationally, ubiquitinated. Amino acid-induced 'Lys-48'-linked polyubiquitination of DEPDC5 by the BCR(KLHL22) ubiquitin ligase complex leads to DEPDC5 proteasomal degradation and inhibition of the GATOR1 complex. Ubiquitination may occur at multiple lysines. As to expression, expressed in developing and adult brain.

It localises to the lysosome membrane. Its subcellular location is the cytoplasm. The protein resides in the cytosol. It is found in the perinuclear region. As a component of the GATOR1 complex functions as an inhibitor of the amino acid-sensing branch of the mTORC1 pathway. In response to amino acid depletion, the GATOR1 complex has GTPase activating protein (GAP) activity and strongly increases GTP hydrolysis by RagA/RRAGA (or RagB/RRAGB) within heterodimeric Rag complexes, thereby turning them into their inactive GDP-bound form, releasing mTORC1 from lysosomal surface and inhibiting mTORC1 signaling. In the presence of abundant amino acids, the GATOR1 complex is negatively regulated by GATOR2, the other GATOR subcomplex, in this amino acid-sensing branch of the TORC1 pathway. Within the GATOR1 complex, DEPDC5 mediates direct interaction with the nucleotide-binding pocket of small GTPases Rag (RagA/RRAGA, RagB/RRAGB, RagC/RRAGC and/or RagD/RRAGD) and coordinates their nucleotide loading states by promoting RagA/RRAGA or RagB/RRAGB into their GDP-binding state and RagC/RRAGC or RagD/RRAGD into their GTP-binding state. However, it does not execute the GAP activity, which is mediated by NPRL2. The chain is GATOR1 complex protein DEPDC5 from Homo sapiens (Human).